The chain runs to 45 residues: Bacteriocin fulvocin-C (45 aa).

In terms of biological role, bacteriocin. This chain is Bacteriocin fulvocin-C, found in Myxococcus fulvus.